A 466-amino-acid chain; its full sequence is MSIASVASVFKGEHAVGSKVTVRGWVRTRRDSKAGISFLAVYDGSCFNPIQGVVPNSLDNYDNEVLKLTAGCSVVMTGDVVESPGAGQAFELQVTDIEVAGWVDDPDTYPMAAKRHSIEHLRELAHLRPRTNIIGAVARVRNCLSQAIHRFYHEEGFIWVSTPLITASDCEGAGEMFRVSTLDMENLPRTEAGKVDYDKDFFGKEAFLTVSGQLNAETYACALSKVYTFGPTFRAENSNTSRHLAEFWMVEPEVAFANLNDIAGLAEAMLKYAFNAVLTERMDDLTFFAQHVDKTVIDRLQSFVSSDFAQVDYTDAVEILQNCGRTFEFPVSWGIDLSSEHERYLAEEHFKAPVVVKNYPKDIKAFYMRLNDDGKTVAAMDVLAPGIGEIIGGSQREERLDVLDMRLAEMDLNQEDYWWYRDMRRYGTVPHAGFGLGFERLVSYVTGVNNIRDVIPFPRAPRTANF.

This sequence belongs to the class-II aminoacyl-tRNA synthetase family. Homodimer.

It is found in the cytoplasm. It catalyses the reaction tRNA(Asn) + L-asparagine + ATP = L-asparaginyl-tRNA(Asn) + AMP + diphosphate + H(+). This chain is Asparagine--tRNA ligase, found in Shewanella baltica (strain OS185).